The following is a 105-amino-acid chain: Nucleoid-associated protein PTH_0052 (105 aa).

This sequence belongs to the YbaB/EbfC family. As to quaternary structure, homodimer.

The protein localises to the cytoplasm. The protein resides in the nucleoid. Its function is as follows. Binds to DNA and alters its conformation. May be involved in regulation of gene expression, nucleoid organization and DNA protection. The chain is Nucleoid-associated protein PTH_0052 from Pelotomaculum thermopropionicum (strain DSM 13744 / JCM 10971 / SI).